We begin with the raw amino-acid sequence, 226 residues long: MARILRASCLLSLLLAGFVPPGRGQEKSKTDCHGGMSGTIYEYGALTIDGEEYIPFKQYAGKYILFVNVASYUGLTDQYLELNALQEELGPFGLVILGFPCNQFGKQEPGENSEILPSLKYVRPGGGFVPNFQLFEKGDVNGEKEQKFYTFLKNSCPPTAELLGSPGRLFWEPMKIHDIRWNFEKFLVGPDGIPIMRWYHRTTVSNVKMDILSYMRRQAALGARGK.

Positions 1–24 are cleaved as a signal peptide; the sequence is MARILRASCLLSLLLAGFVPPGRG. U73 is a catalytic residue. Residue U73 is a non-standard amino acid, selenocysteine.

It belongs to the glutathione peroxidase family. As to quaternary structure, homotetramer. Secreted in plasma.

The protein resides in the secreted. The catalysed reaction is 2 glutathione + H2O2 = glutathione disulfide + 2 H2O. The enzyme catalyses tert-butyl hydroperoxide + 2 glutathione = tert-butanol + glutathione disulfide + H2O. Functionally, protects cells and enzymes from oxidative damage, by catalyzing the reduction of hydrogen peroxide, lipid peroxides and organic hydroperoxide, by glutathione. The sequence is that of Glutathione peroxidase 3 from Rattus norvegicus (Rat).